Reading from the N-terminus, the 425-residue chain is D-tagatose 6-phosphate 4-epimerase (425 aa).

It belongs to the GatZ/KbaZ family.

The catalysed reaction is keto-D-tagatose 6-phosphate = keto-D-fructose 6-phosphate. It participates in carbohydrate metabolism. Functionally, involved in galactitol and D-altritol catabolism. Catalyzes the epimerization of D-tagatose 6-phosphate to D-fructose 6-phosphate. The polypeptide is D-tagatose 6-phosphate 4-epimerase (Agrobacterium fabrum (strain C58 / ATCC 33970) (Agrobacterium tumefaciens (strain C58))).